The primary structure comprises 51 residues: Ribosome biogenesis protein Nop10 (51 aa).

Belongs to the NOP10 family.

Its function is as follows. Involved in ribosome biogenesis; more specifically in 18S rRNA pseudouridylation and in cleavage of pre-rRNA. This chain is Ribosome biogenesis protein Nop10, found in Methanococcus aeolicus (strain ATCC BAA-1280 / DSM 17508 / OCM 812 / Nankai-3).